Reading from the N-terminus, the 782-residue chain is Zinc finger Y-chromosomal protein 1 (782 aa).

Disordered stretches follow at residues 211–233 (ADLEGSSEVTMNAESGTDSSKLD) and 360–386 (LNQDESGGLDRVPKQKSKKKKRPESKQ). Polar residues predominate over residues 217–229 (SEVTMNAESGTDS). A Nuclear localization signal motif is present at residues 372–382 (PKQKSKKKKRP). The span at 373–382 (KQKSKKKKRP) shows a compositional bias: basic residues. 13 consecutive C2H2-type zinc fingers follow at residues 403–425 (YPCMFCGKKFKTKRFLKRHTKNH), 434–456 (YHCTECDYSTNKKISLHNHMESH), 466–488 (TECDDCRKNLSHAGTLCTHKTMH), 497–520 (CKCKFCDYETAEQTLLNHHLLVVH), 526–548 (HICGECGKGFRHPSALKKHIRVH), 554–577 (YECQYCEYKSADSSNLKTHIKSKH), 583–605 (LKCGICLLTFSDNKEAQQHAVLH), 611–634 (HQCSHCNHKSSNSSDLKRHIISVH), 640–662 (HKCDMCSKGFHRPSELKKHVATH), 668–691 (HQCRHCDFNSPDPFLLSHHILSAH), 697–719 (FKCKRCKKEFQQQCELQTHMKTH), 725–748 (YQCEYCEYSTKDASGFKRHVISIH), and 754–777 (HSCDFCKKGFRRPSEKNQHIMRHH).

This sequence belongs to the krueppel C2H2-type zinc-finger protein family. ZFX/ZFY subfamily.

It localises to the nucleus. Probable transcriptional activator. Binds to the consensus sequence 5'-AGGCCY-3'. The chain is Zinc finger Y-chromosomal protein 1 (Zfy1) from Mus musculus (Mouse).